We begin with the raw amino-acid sequence, 205 residues long: Small ribosomal subunit protein uS4 (205 aa).

Positions 18–49 are disordered; that stretch reads NIWGRPKSPVNKREYGPGQHGQRRKGKLSDFG. In terms of domain architecture, S4 RNA-binding spans 94–157; the sequence is RRLDAIVYRA…KQLALVLEAN (64 aa).

The protein belongs to the universal ribosomal protein uS4 family. Part of the 30S ribosomal subunit. Contacts protein S5. The interaction surface between S4 and S5 is involved in control of translational fidelity.

Functionally, one of the primary rRNA binding proteins, it binds directly to 16S rRNA where it nucleates assembly of the body of the 30S subunit. Its function is as follows. With S5 and S12 plays an important role in translational accuracy. This Afipia carboxidovorans (strain ATCC 49405 / DSM 1227 / KCTC 32145 / OM5) (Oligotropha carboxidovorans) protein is Small ribosomal subunit protein uS4.